Reading from the N-terminus, the 407-residue chain is Phosphopentomutase (407 aa).

Residues aspartate 10, aspartate 306, histidine 311, aspartate 347, histidine 348, and histidine 359 each coordinate Mn(2+).

The protein belongs to the phosphopentomutase family. The cofactor is Mn(2+).

Its subcellular location is the cytoplasm. The enzyme catalyses 2-deoxy-alpha-D-ribose 1-phosphate = 2-deoxy-D-ribose 5-phosphate. The catalysed reaction is alpha-D-ribose 1-phosphate = D-ribose 5-phosphate. Its pathway is carbohydrate degradation; 2-deoxy-D-ribose 1-phosphate degradation; D-glyceraldehyde 3-phosphate and acetaldehyde from 2-deoxy-alpha-D-ribose 1-phosphate: step 1/2. Its function is as follows. Isomerase that catalyzes the conversion of deoxy-ribose 1-phosphate (dRib-1-P) and ribose 1-phosphate (Rib-1-P) to deoxy-ribose 5-phosphate (dRib-5-P) and ribose 5-phosphate (Rib-5-P), respectively. The polypeptide is Phosphopentomutase (Escherichia coli O127:H6 (strain E2348/69 / EPEC)).